Consider the following 155-residue polypeptide: Small ribosomal subunit protein uS7c (155 aa).

The protein belongs to the universal ribosomal protein uS7 family. In terms of assembly, part of the 30S ribosomal subunit.

Its subcellular location is the plastid. The protein resides in the chloroplast. In terms of biological role, one of the primary rRNA binding proteins, it binds directly to 16S rRNA where it nucleates assembly of the head domain of the 30S subunit. In Saururus cernuus (Lizard's tail), this protein is Small ribosomal subunit protein uS7c (rps7).